A 296-amino-acid chain; its full sequence is Mycothiol acetyltransferase (296 aa).

N-acetyltransferase domains lie at 17–146 (YNHR…AVYD) and 156–296 (LKTA…VYEK). 1D-myo-inositol 2-(L-cysteinylamino)-2-deoxy-alpha-D-glucopyranoside is bound at residue glutamate 44. An acetyl-CoA-binding site is contributed by 81–83 (LAV). Positions 183, 222, and 230 each coordinate 1D-myo-inositol 2-(L-cysteinylamino)-2-deoxy-alpha-D-glucopyranoside. Acetyl-CoA is bound by residues 234–236 (VGL) and 241–247 (RGKGLGD). Tyrosine 268 serves as a coordination point for 1D-myo-inositol 2-(L-cysteinylamino)-2-deoxy-alpha-D-glucopyranoside.

It belongs to the acetyltransferase family. MshD subfamily. In terms of assembly, monomer.

The catalysed reaction is 1D-myo-inositol 2-(L-cysteinylamino)-2-deoxy-alpha-D-glucopyranoside + acetyl-CoA = mycothiol + CoA + H(+). In terms of biological role, catalyzes the transfer of acetyl from acetyl-CoA to desacetylmycothiol (Cys-GlcN-Ins) to form mycothiol. The protein is Mycothiol acetyltransferase of Corynebacterium efficiens (strain DSM 44549 / YS-314 / AJ 12310 / JCM 11189 / NBRC 100395).